We begin with the raw amino-acid sequence, 192 residues long: Charged multivesicular body protein 1 (192 aa).

2 coiled-coil regions span residues 7–35 and 102–125; these read QLKF…KLKK and NMDL…LDVQ. The disordered stretch occupies residues 164-192; that stretch reads QMGSAPSEKVQQGETDELTERLNRLKQKN.

It belongs to the SNF7 family. As to quaternary structure, probable peripherally associated component of the endosomal sorting required for transport complex III (ESCRT-III).

Its subcellular location is the endosome membrane. In terms of biological role, probable peripherally associated component of the endosomal sorting required for transport complex III (ESCRT-III) which is involved in multivesicular bodies (MVBs) formation and sorting of endosomal cargo proteins into MVBs. MVBs contain intraluminal vesicles (ILVs) that are generated by invagination and scission from the limiting membrane of the endosome and are delivered to lysosomes enabling degradation of membrane proteins. The polypeptide is Charged multivesicular body protein 1 (chmp1) (Dictyostelium discoideum (Social amoeba)).